We begin with the raw amino-acid sequence, 437 residues long: Serine hydroxymethyltransferase (437 aa).

(6S)-5,6,7,8-tetrahydrofolate is bound by residues L130 and G134–L136. K239 is subject to N6-(pyridoxal phosphate)lysine.

The protein belongs to the SHMT family. Homodimer. Requires pyridoxal 5'-phosphate as cofactor.

Its subcellular location is the cytoplasm. It carries out the reaction (6R)-5,10-methylene-5,6,7,8-tetrahydrofolate + glycine + H2O = (6S)-5,6,7,8-tetrahydrofolate + L-serine. Its pathway is one-carbon metabolism; tetrahydrofolate interconversion. It participates in amino-acid biosynthesis; glycine biosynthesis; glycine from L-serine: step 1/1. Its function is as follows. Catalyzes the reversible interconversion of serine and glycine with tetrahydrofolate (THF) serving as the one-carbon carrier. This reaction serves as the major source of one-carbon groups required for the biosynthesis of purines, thymidylate, methionine, and other important biomolecules. Also exhibits THF-independent aldolase activity toward beta-hydroxyamino acids, producing glycine and aldehydes, via a retro-aldol mechanism. The sequence is that of Serine hydroxymethyltransferase from Bartonella quintana (strain Toulouse) (Rochalimaea quintana).